Consider the following 265-residue polypeptide: Hydroxyethylthiazole kinase (265 aa).

Met-43 lines the substrate pocket. Lys-118 and Thr-165 together coordinate ATP. Gly-192 provides a ligand contact to substrate.

Belongs to the Thz kinase family. The cofactor is Mg(2+).

It carries out the reaction 5-(2-hydroxyethyl)-4-methylthiazole + ATP = 4-methyl-5-(2-phosphooxyethyl)-thiazole + ADP + H(+). Its pathway is cofactor biosynthesis; thiamine diphosphate biosynthesis; 4-methyl-5-(2-phosphoethyl)-thiazole from 5-(2-hydroxyethyl)-4-methylthiazole: step 1/1. Functionally, catalyzes the phosphorylation of the hydroxyl group of 4-methyl-5-beta-hydroxyethylthiazole (THZ). In Pyrococcus horikoshii (strain ATCC 700860 / DSM 12428 / JCM 9974 / NBRC 100139 / OT-3), this protein is Hydroxyethylthiazole kinase.